An 835-amino-acid polypeptide reads, in one-letter code: Adhesion G protein-coupled receptor E5 (835 aa).

Residues 1 to 20 (MGGRVFLAFCVWLTLPGAET) form the signal peptide. Residues 21 to 552 (QDSRGCARWC…EDWKLTLITR (532 aa)) lie on the Extracellular side of the membrane. The EGF-like 1 domain occupies 22 to 63 (DSRGCARWCPQNSSCVNATACRCNPGFSSFSEIITTPTETCD). 15 disulfides stabilise this stretch: C26–C36, C30–C42, C44–C62, C68–C82, C76–C91, C93–C114, C120–C133, C127–C142, C144–C158, C164–C177, C171–C186, C188–C207, C213–C226, C220–C235, and C237–C256. N-linked (GlcNAc...) asparagine glycans are attached at residues N33 and N38. The EGF-like 2; calcium-binding domain maps to 64 to 115 (DINECATPSKVSCGKFSDCWNTEGSYDCVCSPGYEPVSGAKTFKNESENTCQ). N108 carries N-linked (GlcNAc...) asparagine glycosylation. Positions 116-159 (DVDECQQNPRLCKSYGTCVNTLGSYTCQCLPGFKFIPEDPKVCT) constitute an EGF-like 3; calcium-binding domain. Positions 160 to 208 (DVNECTSGQNPCHSSTHCLNNVGSYQCRCRPGWQPIPGSPNGPNNTVCE) constitute an EGF-like 4; calcium-binding domain. A glycan (N-linked (GlcNAc...) asparagine) is linked at N203. Residues 209-257 (DVDECSSGQHQCDSSTVCFNTVGSYSCRCRPGWKPRHGIPNNQKDTVCE) form the EGF-like 5; calcium-binding domain. In terms of domain architecture, GAIN-B spans 349-543 (PFTYISPSNT…AILMAHYDVE (195 aa)). N371, N406, N413, N453, and N520 each carry an N-linked (GlcNAc...) asparagine glycan. Cystine bridges form between C495/C525 and C513/C527. Residues 495-543 (CAFWKSDSDRGGHWATEGCQVLGSKNGSTTCQCSHLSSFAILMAHYDVE) are GPS. The helical transmembrane segment at 553 to 572 (VGLALSLFCLLLCILTFLLV) threads the bilayer. At 573-581 (RPIQGSRTT) the chain is on the cytoplasmic side. A helical transmembrane segment spans residues 582-601 (IHLHLCICLFVGSTIFLAGI). Residues 602 to 620 (ENEGGQVGLRCRLVAGLLH) are Extracellular-facing. Residues 621–642 (YCFLAAFCWMSLEGLELYFLVV) form a helical membrane-spanning segment. Residues 643-653 (RVFQGQGLSTR) lie on the Cytoplasmic side of the membrane. Residues 654–674 (WLCLIGYGVPLLIVGVSAAIY) form a helical membrane-spanning segment. Residues 675 to 691 (SKGYGRPRYCWLDFEQG) lie on the Extracellular side of the membrane. The helical transmembrane segment at 692–712 (FLWSFLGPVTFIILCNAVIFV) threads the bilayer. The Cytoplasmic portion of the chain corresponds to 713 to 739 (TTVWKLTQKFSEINPDMKKLKKARALT). Residues 740–760 (ITAIAQLFLLGCTWVFGLFIF) traverse the membrane as a helical segment. Residues 761-766 (DDRSLV) are Extracellular-facing. A helical transmembrane segment spans residues 767 to 789 (LTYVFTILNCLQGAFLYLLHCLL). The Cytoplasmic segment spans residues 790–835 (NKKVREEYRKWACLVAGGSKYSEFTSTTSGTGHNQTRALRASESGI). The span at 814–826 (TSTTSGTGHNQTR) shows a compositional bias: polar residues. The interval 814-835 (TSTTSGTGHNQTRALRASESGI) is disordered. S815 carries the post-translational modification Phosphoserine. T816 carries the post-translational modification Phosphothreonine. S818 carries the post-translational modification Phosphoserine. Residue T825 is modified to Phosphothreonine. 2 positions are modified to phosphoserine: S831 and S833.

This sequence belongs to the G-protein coupled receptor 2 family. LN-TM7 subfamily. In terms of assembly, forms a heterodimer, consisting of a large extracellular region (alpha subunit) non-covalently linked to a seven-transmembrane moiety (beta subunit). Interacts with complement decay-accelerating factor (DAF). The largest isoform (isoform 1) interacts with chondroitin sulfate. Post-translationally, proteolytically cleaved into 2 subunits, an extracellular alpha subunit and a seven-transmembrane subunit. In terms of tissue distribution, broadly expressed, found on most hematopoietic cells, including activated lymphocytes, monocytes, macrophages, dendritic cells, and granulocytes. Expressed also abundantly by smooth muscle cells. Expressed in thyroid, colorectal, gastric, esophageal and pancreatic carcinomas too. Expression are increased under inflammatory conditions in the CNS of multiple sclerosis and in synovial tissue of patients with rheumatoid arthritis. Increased expression of CD97 in the synovium is accompanied by detectable levels of soluble CD97 in the synovial fluid.

The protein resides in the cell membrane. It is found in the secreted. It localises to the extracellular space. Receptor potentially involved in both adhesion and signaling processes early after leukocyte activation. Plays an essential role in leukocyte migration. The sequence is that of Adhesion G protein-coupled receptor E5 from Homo sapiens (Human).